The primary structure comprises 301 residues: GTPase Era (301 aa).

The Era-type G domain maps to 7 to 175; that stretch reads YCGFIAIVGR…AAIVRKHLPE (169 aa). Residues 15–22 form a G1 region; that stretch reads GRPNVGKS. Position 15 to 22 (15 to 22) interacts with GTP; the sequence is GRPNVGKS. The segment at 41-45 is G2; it reads QTTRH. The G3 stretch occupies residues 62-65; sequence DTPG. GTP contacts are provided by residues 62-66 and 124-127; these read DTPGL and NKVD. Residues 124-127 are G4; that stretch reads NKVD. The segment at 154-156 is G5; it reads ISA. A KH type-2 domain is found at 206–283; the sequence is LGAELPYSVT…HLELWVKVKS (78 aa).

It belongs to the TRAFAC class TrmE-Era-EngA-EngB-Septin-like GTPase superfamily. Era GTPase family. In terms of assembly, monomer.

Its subcellular location is the cytoplasm. The protein resides in the cell inner membrane. Its function is as follows. An essential GTPase that binds both GDP and GTP, with rapid nucleotide exchange. Plays a role in 16S rRNA processing and 30S ribosomal subunit biogenesis and possibly also in cell cycle regulation and energy metabolism. This Escherichia coli (strain K12 / DH10B) protein is GTPase Era.